A 341-amino-acid chain; its full sequence is GTP 3',8-cyclase (341 aa).

A Radical SAM core domain is found at 11–231 (QKSRPLRDLR…RIINEDMPIE (221 aa)). Arg20 serves as a coordination point for GTP. Residues Cys27 and Cys31 each contribute to the [4Fe-4S] cluster site. Tyr33 lines the S-adenosyl-L-methionine pocket. Cys34 provides a ligand contact to [4Fe-4S] cluster. Arg75 lines the GTP pocket. Gly79 is an S-adenosyl-L-methionine binding site. A GTP-binding site is contributed by Thr106. An S-adenosyl-L-methionine-binding site is contributed by Ser130. Lys167 is a GTP binding site. Residue Met201 participates in S-adenosyl-L-methionine binding. Cys265 and Cys268 together coordinate [4Fe-4S] cluster. 270–272 (RAR) serves as a coordination point for GTP. Cys282 provides a ligand contact to [4Fe-4S] cluster.

It belongs to the radical SAM superfamily. MoaA family. As to quaternary structure, monomer and homodimer. [4Fe-4S] cluster serves as cofactor.

It carries out the reaction GTP + AH2 + S-adenosyl-L-methionine = (8S)-3',8-cyclo-7,8-dihydroguanosine 5'-triphosphate + 5'-deoxyadenosine + L-methionine + A + H(+). The protein operates within cofactor biosynthesis; molybdopterin biosynthesis. Catalyzes the cyclization of GTP to (8S)-3',8-cyclo-7,8-dihydroguanosine 5'-triphosphate. In Bacillus licheniformis (strain ATCC 14580 / DSM 13 / JCM 2505 / CCUG 7422 / NBRC 12200 / NCIMB 9375 / NCTC 10341 / NRRL NRS-1264 / Gibson 46), this protein is GTP 3',8-cyclase.